Consider the following 109-residue polypeptide: Avian agnoprotein 2b (109 aa).

A disordered region spans residues 89-109 (QPALASRLTQPNRPNRGRLAK).

The protein resides in the host cytoplasm. In Psittacidae (parrots), this protein is Avian agnoprotein 2b.